A 242-amino-acid chain; its full sequence is Glutamate transport ATP-binding protein GluA (242 aa).

Residues 2-236 (IKMTGVQKFF…PQTDRAKDFL (235 aa)) form the ABC transporter domain. 34 to 41 (GPSGSGKS) is a binding site for ATP.

The protein belongs to the ABC transporter superfamily. The complex is composed of two ATP-binding proteins (GluA), two transmembrane proteins (GluC and GluD) and a solute-binding protein (GluB).

The protein resides in the cell membrane. It catalyses the reaction a polar amino acid(out) + ATP + H2O = a polar amino acid(in) + ADP + phosphate + H(+). It carries out the reaction L-glutamate(out) + ATP + H2O = L-glutamate(in) + ADP + phosphate + H(+). Its function is as follows. Part of the ABC transporter complex GluABCD involved in glutamate uptake. Probably responsible for energy coupling to the transport system. The polypeptide is Glutamate transport ATP-binding protein GluA (Corynebacterium efficiens (strain DSM 44549 / YS-314 / AJ 12310 / JCM 11189 / NBRC 100395)).